Here is a 287-residue protein sequence, read N- to C-terminus: 4-diphosphocytidyl-2-C-methyl-D-erythritol kinase (287 aa).

Lys22 is an active-site residue. 102 to 112 (PAAAGIGGGSS) serves as a coordination point for ATP. Asp139 is an active-site residue.

The protein belongs to the GHMP kinase family. IspE subfamily.

It catalyses the reaction 4-CDP-2-C-methyl-D-erythritol + ATP = 4-CDP-2-C-methyl-D-erythritol 2-phosphate + ADP + H(+). Its pathway is isoprenoid biosynthesis; isopentenyl diphosphate biosynthesis via DXP pathway; isopentenyl diphosphate from 1-deoxy-D-xylulose 5-phosphate: step 3/6. Catalyzes the phosphorylation of the position 2 hydroxy group of 4-diphosphocytidyl-2C-methyl-D-erythritol. The protein is 4-diphosphocytidyl-2-C-methyl-D-erythritol kinase of Dinoroseobacter shibae (strain DSM 16493 / NCIMB 14021 / DFL 12).